The following is a 490-amino-acid chain: Glucose-6-phosphate 1-dehydrogenase (490 aa).

NADP(+)-binding positions include Arg-48, 90-91 (DI), and Lys-145. The substrate site is built by His-175, Lys-179, Glu-213, and Asp-232. His-237 (proton acceptor) is an active-site residue. Residues Lys-340 and Lys-345 each contribute to the substrate site.

Belongs to the glucose-6-phosphate dehydrogenase family.

The catalysed reaction is D-glucose 6-phosphate + NADP(+) = 6-phospho-D-glucono-1,5-lactone + NADPH + H(+). It participates in carbohydrate degradation; pentose phosphate pathway; D-ribulose 5-phosphate from D-glucose 6-phosphate (oxidative stage): step 1/3. Catalyzes the oxidation of glucose 6-phosphate to 6-phosphogluconolactone. This chain is Glucose-6-phosphate 1-dehydrogenase, found in Buchnera aphidicola subsp. Baizongia pistaciae (strain Bp).